The sequence spans 209 residues: 3-hexulose-6-phosphate synthase (209 aa).

The protein belongs to the HPS/KGPDC family. HPS subfamily. Homodimer.

It carries out the reaction D-ribulose 5-phosphate + formaldehyde = D-arabino-hex-3-ulose 6-phosphate. The protein operates within one-carbon metabolism; formaldehyde assimilation via RuMP pathway; D-fructose 6-phosphate from D-ribulose 5-phosphate and formaldehyde: step 1/2. Functionally, catalyzes the condensation of ribulose 5-phosphate with formaldehyde to form 3-hexulose 6-phosphate. The protein is 3-hexulose-6-phosphate synthase (rmpA) of Methylomonas aminofaciens.